The following is a 163-amino-acid chain: uncharacterized protein (163 aa).

In terms of tissue distribution, expressed in keratinocytes.

This is an uncharacterized protein from Homo sapiens (Human).